The sequence spans 428 residues: Tyrosine--tRNA ligase (428 aa).

L-tyrosine is bound at residue Y41. The 'HIGH' region motif lies at 46–55 (PTADSLHLGH). L-tyrosine contacts are provided by Y179 and Q183. The short motif at 239 to 243 (KFGKT) is the 'KMSKS' region element. K242 provides a ligand contact to ATP. One can recognise an S4 RNA-binding domain in the interval 361–418 (TDLMQALVDAELQPSRGQARKTIASNAVTINGEKQSDPEYIFNDEDRLFGRYTLLRRG).

It belongs to the class-I aminoacyl-tRNA synthetase family. TyrS type 1 subfamily. Homodimer.

Its subcellular location is the cytoplasm. It catalyses the reaction tRNA(Tyr) + L-tyrosine + ATP = L-tyrosyl-tRNA(Tyr) + AMP + diphosphate + H(+). Its function is as follows. Catalyzes the attachment of tyrosine to tRNA(Tyr) in a two-step reaction: tyrosine is first activated by ATP to form Tyr-AMP and then transferred to the acceptor end of tRNA(Tyr). In Salmonella arizonae (strain ATCC BAA-731 / CDC346-86 / RSK2980), this protein is Tyrosine--tRNA ligase.